The following is an 82-amino-acid chain: ATP synthase subunit c, chloroplastic (82 aa).

Helical transmembrane passes span 7–27 and 57–77; these read AASVVASGLSVGLAAIGPGIG and LAFMESLTIYGLVVALALLFA.

Belongs to the ATPase C chain family. In terms of assembly, F-type ATPases have 2 components, F(1) - the catalytic core - and F(0) - the membrane proton channel. F(1) has five subunits: alpha(3), beta(3), gamma(1), delta(1), epsilon(1). F(0) has four main subunits: a(1), b(1), b'(1) and c(10-14). The alpha and beta chains form an alternating ring which encloses part of the gamma chain. F(1) is attached to F(0) by a central stalk formed by the gamma and epsilon chains, while a peripheral stalk is formed by the delta, b and b' chains.

It is found in the plastid. The protein resides in the chloroplast thylakoid membrane. In terms of biological role, f(1)F(0) ATP synthase produces ATP from ADP in the presence of a proton or sodium gradient. F-type ATPases consist of two structural domains, F(1) containing the extramembraneous catalytic core and F(0) containing the membrane proton channel, linked together by a central stalk and a peripheral stalk. During catalysis, ATP synthesis in the catalytic domain of F(1) is coupled via a rotary mechanism of the central stalk subunits to proton translocation. Its function is as follows. Key component of the F(0) channel; it plays a direct role in translocation across the membrane. A homomeric c-ring of between 10-14 subunits forms the central stalk rotor element with the F(1) delta and epsilon subunits. The chain is ATP synthase subunit c, chloroplastic from Guillardia theta (Cryptophyte).